We begin with the raw amino-acid sequence, 229 residues long: uncharacterized protein (229 aa).

This is an uncharacterized protein from Bacillus subtilis (strain 168).